Here is a 369-residue protein sequence, read N- to C-terminus: Serine/threonine-protein phosphatase PP2A-1 catalytic subunit (369 aa).

The disordered stretch occupies residues 1 to 57 (MDTDLDVPMQDAVTEQLTPTVSEDMDLNNNSSDNNAEEFSVDDLKPGSSGIADHKSS). The Mn(2+) site is built by Asp117, His119, Asp145, and Asn177. His178 functions as the Proton donor in the catalytic mechanism. Mn(2+) contacts are provided by His227 and His301. Residues 348–369 (QYDPSVRPGEPSVSRKTPDYFL) form a disordered region. Leu369 carries the leucine methyl ester modification.

Belongs to the PPP phosphatase family. PP-2A subfamily. In terms of assembly, inactivated in a complex with phosphatase methylesterase PPE1 (PP2Ai). Interacts with phosphatase 2A activator RRD2, which can reactivate PP2Ai by dissociating the catalytic subunit from the complex. Forms a ternary complex with RRD2-TAP42. Requires Mn(2+) as cofactor. Post-translationally, reversibly methyl esterified on Leu-369 by leucine carboxyl methyltransferase 1 (PPM1) and protein phosphatase methylesterase 1 (PPE1). Carboxyl methylation influences the affinity of the catalytic subunit for the different regulatory subunits, thereby modulating the PP2A holoenzyme's substrate specificity, enzyme activity and cellular localization.

It catalyses the reaction O-phospho-L-seryl-[protein] + H2O = L-seryl-[protein] + phosphate. It carries out the reaction O-phospho-L-threonyl-[protein] + H2O = L-threonyl-[protein] + phosphate. Exact function not known, phosphatase 2A performs an essential cellular function. This chain is Serine/threonine-protein phosphatase PP2A-1 catalytic subunit (PPH21), found in Saccharomyces cerevisiae (strain ATCC 204508 / S288c) (Baker's yeast).